A 793-amino-acid chain; its full sequence is Endonuclease MutS2 (793 aa).

329 to 336 (GPNTGGKT) is a binding site for ATP. The tract at residues 611-639 (LARARQAVEPTEEEQRARRRGEVPRGLKP) is disordered. Over residues 623-639 (EEQRARRRGEVPRGLKP) the composition is skewed to basic and acidic residues. A Smr domain is found at 717–792 (VDLRGLMVEE…GDGVTVAKLR (76 aa)).

Belongs to the DNA mismatch repair MutS family. MutS2 subfamily. In terms of assembly, homodimer. Binds to stalled ribosomes, contacting rRNA.

Functionally, endonuclease that is involved in the suppression of homologous recombination and thus may have a key role in the control of bacterial genetic diversity. Its function is as follows. Acts as a ribosome collision sensor, splitting the ribosome into its 2 subunits. Detects stalled/collided 70S ribosomes which it binds and splits by an ATP-hydrolysis driven conformational change. Acts upstream of the ribosome quality control system (RQC), a ribosome-associated complex that mediates the extraction of incompletely synthesized nascent chains from stalled ribosomes and their subsequent degradation. Probably generates substrates for RQC. This chain is Endonuclease MutS2, found in Symbiobacterium thermophilum (strain DSM 24528 / JCM 14929 / IAM 14863 / T).